The primary structure comprises 1906 residues: MIIRVCIRCFIVLTLVLGIGGCNFFGINSGREPLPAVSPLTPPKLPDWIEQISPIGEAQPLNQIRIRFKEALIPVESLDSPEQQQLLQKFALWPPLPGQFRFLTPRMVGFQADKALPIATRLQVTLKAGLADLKNHRLDKDLSWTFNTQSINLTNLPGVNPIEKADAEPIDLQPKLQFTSNVELDLASVQEHLQLIPEGKNEGLRFQVTLNKEEKPLDKEEPLKKFDPSARNWIYNLRPQKNLKTATRYRLVFSPGIRPAYGNLVTDREFVSKLSTYSPLAFQKINFYGQPDAGGTYGRFIKGSPQLEFNNILVAESAKTNIKINPAPKDISRLLQVNDEDRIIGINPYALEPAKTYTITIGENLQDKFGQTLGKPVSLKYDTGDLAGDIWVPSDLNIFPAGKDLRLNISTVNLPESKYQAAYRVVKPTDLVYFNYGNDLLPKPAEWKSFQVSGKKNQSVDVTVPLREKINAKTGMLAYGVQARTNKYQENGKELWREPTTYGLVELTNLGVFSQWFPESGLIRVNHLTDGAPVKAAVIEIYQSKLQAKSRPEPVPCATGKTDENGTFRVNREALQQCTAGSQNSIKSPELLVIASEKEDWAFTRTEEYSGVYGYGIDAGWQGNKPESRGVIFSDRQLYQSGEKAWFTGFADYLQNGVIQQDKNADYQITLVNPDGQKTSLGTQTTNEFGTFSLEMPINKTQGLGYYTIQAKGKNGLEISGEFRVAEFKPPNFKVEVKLDKEFAYIGDDVDINATSNYLFGAPVEGGEAKYFITRQQANFIPKGWEEFTFGRQWFWPEEAPTISSDVLQSNSQLDGNDKSSQMVNVAKDLPYPMTYRVDVQVADVSNLSVANSQSFTALPSNRLIGLKSNFIADAGKAFPIEVIIADPTGKLITGQRVRLELQQIKYSSVTQLVEGSQTPKNQVEYKTVAQTEITSTSNPQSVNLTPPESGTYRIRVNFSDAKNELGATDSQIWVTGGNAVFWGTRDKDVLEVKLDKKEYKAGETATALIQSPYADAELYFAVIKDKPIYQQITKVQGSAPQIQFRVTPEMLPNAAVEAVLVRQGKPINQVEVGSLDNLVKIGFTPFKVNLEDKYLKLQVKPAQASLEPGAEETIQLEVKDNQGNPTKGQLTVMVVNEAVLQLSGYRPPNLVDTVYAEQPISTRFTDNRPDVILQPQDVAKPKGWGYGGGFSTGAANTRTRTDFQPLAYYNGSVLTDASGNAQITVKLPDDLTTWRVMAVATDGNLRFGNGDATFITTKPLLSNAILPQFVRPGDRILAGLSVTNNTGNTGNLSINGEISGAVKFNSKNPTTTTLQTQAESATQAYRFPMVADSVGVGKVRFTTQLNGTADAFELPLQVKPLEITEQIVETGVSQKQIKIPLNVDKNTFPEAGGLDIQLASTLIPEIKAPAKQVLTDNDLPFTEPSASQLIIATNLQTIAQKYGQTFAEFNSRQQANLAVEKLQKLQISDGGFAAFPGQEKSDPWVSAYSVESLVKASQVFPNLVDTGMLSRLKTYLQKVLANPGEYDFCKQQLCKRQLQLNALIALSELGDKRNTFLTDIYEQRNNFDLVTQIKLARYLSQFPEWQDESQQLVNKLQQNISETGRTAVVSLPPSWGWMSSPTTAQAQALRLFIAKQSKPEIIDKLLQSLLALRRDGTWQTDYNNAQALTALVEYGQLQPTPPNFVATVQLAGRKLGENRFTGYKNPSLQLSVPMNQLPRGRHDLTLQKSGNGTLHYLVAYNYRLQGNQPGRFNGLRITREISQVNAKRILRKTGIYALDQPLTLALGQVFDIGLEIIVDRPVDHLVIKDPLPAGLEAVDASFQTTTAALQAKADSWELGFRNIYSDRIIAYADHLEPGVYSLHYLVRSVTPGTFSWPGAEVHLQYAPEEFGRTAEMKLIVEEKGR.

The first 21 residues, 1 to 21 (MIIRVCIRCFIVLTLVLGIGG), serve as a signal peptide directing secretion. Cys-22 is lipidated: N-palmitoyl cysteine. Cys-22 carries S-diacylglycerol cysteine lipidation.

Belongs to the protease inhibitor I39 (alpha-2-macroglobulin) family. Bacterial alpha-2-macroglobulin subfamily.

The protein localises to the cell membrane. The sequence is that of Alpha-2-macroglobulin homolog from Nostoc sp. (strain PCC 7120 / SAG 25.82 / UTEX 2576).